The sequence spans 132 residues: Histone H2A-alpha (132 aa).

Serine 2 is modified (N-acetylserine). N6-acetyllysine occurs at positions 5 and 9. Residue glutamine 106 is modified to N5-methylglutamine. The residue at position 129 (serine 129) is a Phosphoserine. The [ST]-Q motif signature appears at serine 129–glutamine 130.

The protein belongs to the histone H2A family. In terms of assembly, the nucleosome is a histone octamer containing two molecules each of H2A, H2B, H3 and H4 assembled in one H3-H4 heterotetramer and two H2A-H2B heterodimers. The octamer wraps approximately 147 bp of DNA. Interacts with mdb1 (via BRCT domain) in vitro; this interaction requires phosphorylation of this protein at the S/T-Q motif. In terms of processing, phosphorylated to form H2AS128ph (gamma-H2A) in response to DNA double-strand breaks (DSBs) generated by exogenous genotoxic agents and by stalled replication forks. Phosphorylation is dependent on the DNA damage checkpoint kinases rad3/ATR and tel1/ATM, spreads on either side of a detected DSB site and may mark the surrounding chromatin for recruitment of proteins required for DNA damage signaling and repair. Gamma-H2A is required for recruiting crb2, a modulator of DNA damage checkpoint signaling, to DSB sites. Gamma-H2A is removed from the DNA prior to the strand invasion-primer extension step of the repair process and subsequently dephosphorylated. Dephosphorylation is necessary for efficient recovery from the DNA damage checkpoint. Post-translationally, acetylated by esa1 to form H2AK4ac and H2AK7ac.

It localises to the nucleus. It is found in the chromosome. Functionally, core component of nucleosome which plays a central role in DNA double strand break (DSB) repair. Nucleosomes wrap and compact DNA into chromatin, limiting DNA accessibility to the cellular machineries which require DNA as a template. Histones thereby play a central role in transcription regulation, DNA repair, DNA replication and chromosomal stability. DNA accessibility is regulated via a complex set of post-translational modifications of histones, also called histone code, and nucleosome remodeling. In Schizosaccharomyces pombe (strain 972 / ATCC 24843) (Fission yeast), this protein is Histone H2A-alpha (hta1).